Reading from the N-terminus, the 805-residue chain is MIQPLVKASRPRLWVCSDCLLRRTLSPLLRQQRRRFTGFTAHAPKTLTGTIPVTHKNGDTKHDDSLLRSIFDSPETWKQFSGDKHGRNVGLFRNAYLTSPHGFLDFAHVSLGKARALVDKVLNAQSLDEYRAIVRHLDRLSDILCRVLDMADFVRVTHPDQQIQRTASMAWDMMYEYMNQLNTMTGLYDQLVQAMDNPQVSTTWSEEERMVAEVLKLDFAKSAVHLPKDARDKFVHLSSAISQTGTNFIQHMEPKIPYTTVEKSRMMGMDPVEVKRMASMGKVYVQTLSPQASIALRTVRDDHARHQLFMASRTASRRTVHTLEELMLLRGESAKLSGFESYGHLVLHDRMMASTPESVRQFLQALSENTRPQAQQEVADLTAAKRAHKGGDATLEPWDKDFYAESIRQAIKSRQKREDLSSYFSLGTVMQGLSRIFTRLYGIRFVPREPMPGETWHPDVRRLDVVSDVEGHVAVLYCDLFYRPLKSPNPAHFTLRCSRELSPHEIAETAHTQAENPHVLIPSFESAEFAANDGMAYSRSQDGAIKQLPTIALVCDFPQQSHNRPALLSFFQLETLFHEMGHAIHSILARTSFQNVSGTRCATDLAELPSTLMEYFAADPSVLALFARHYETDNPLPYEWVDNKIREARRFEALDTENQIILAMLDQELHSSKAVQGHIDSTEIFHSLQRQFSTAPPDPQGTAWQGFFGHLVGYGSTYYSYLFDRVLAQRVWNVVFNSGQGGAALQRENGERLKENLLKWGGSKDPWKCLAGALKDERLEGGGEKAMKLVGSWGGQRGTKSDQAV.

The N-terminal 25 residues, 1–25 (MIQPLVKASRPRLWVCSDCLLRRTL), are a transit peptide targeting the mitochondrion. His578 provides a ligand contact to Zn(2+). The active site involves Glu579. Zn(2+) contacts are provided by His582 and His585.

Belongs to the peptidase M3 family. Requires Zn(2+) as cofactor.

The protein resides in the mitochondrion matrix. It catalyses the reaction Release of an N-terminal octapeptide as second stage of processing of some proteins imported into the mitochondrion.. Cleaves proteins, imported into the mitochondrion, to their mature size. While most mitochondrial precursor proteins are processed to the mature form in one step by mitochondrial processing peptidase (MPP), the sequential cleavage by MIP of an octapeptide after initial processing by MPP is a required step for a subgroup of nuclear-encoded precursor proteins destined for the matrix or the inner membrane. The protein is Mitochondrial intermediate peptidase (oct-1) of Neurospora crassa (strain ATCC 24698 / 74-OR23-1A / CBS 708.71 / DSM 1257 / FGSC 987).